Reading from the N-terminus, the 267-residue chain is Phosphate import ATP-binding protein PstB (267 aa).

An ABC transporter domain is found at 21–262 (IEVKNLNFYY…PREKRTQDYI (242 aa)). Residue 53–60 (GPSGCGKS) coordinates ATP.

Belongs to the ABC transporter superfamily. Phosphate importer (TC 3.A.1.7) family. The complex is composed of two ATP-binding proteins (PstB), two transmembrane proteins (PstC and PstA) and a solute-binding protein (PstS).

The protein localises to the cell inner membrane. The catalysed reaction is phosphate(out) + ATP + H2O = ADP + 2 phosphate(in) + H(+). Its function is as follows. Part of the ABC transporter complex PstSACB involved in phosphate import. Responsible for energy coupling to the transport system. This chain is Phosphate import ATP-binding protein PstB, found in Mesorhizobium japonicum (strain LMG 29417 / CECT 9101 / MAFF 303099) (Mesorhizobium loti (strain MAFF 303099)).